Consider the following 338-residue polypeptide: Ketol-acid reductoisomerase (NADP(+)) (338 aa).

The KARI N-terminal Rossmann domain maps to 1 to 181 (MKVYYDSDAD…GGGRAGIIET (181 aa)). Residues 24 to 27 (YGSQ), Arg-47, Ser-50, Ser-52, and 82 to 85 (DEHQ) each bind NADP(+). Residue His-107 is part of the active site. Residue Gly-133 coordinates NADP(+). The 146-residue stretch at 182 to 327 (SFKEETETDL…AKLRAMMPWI (146 aa)) folds into the KARI C-terminal knotted domain. Positions 190, 194, 226, and 230 each coordinate Mg(2+). Ser-251 contributes to the substrate binding site.

Belongs to the ketol-acid reductoisomerase family. Requires Mg(2+) as cofactor.

It carries out the reaction (2R)-2,3-dihydroxy-3-methylbutanoate + NADP(+) = (2S)-2-acetolactate + NADPH + H(+). The catalysed reaction is (2R,3R)-2,3-dihydroxy-3-methylpentanoate + NADP(+) = (S)-2-ethyl-2-hydroxy-3-oxobutanoate + NADPH + H(+). Its pathway is amino-acid biosynthesis; L-isoleucine biosynthesis; L-isoleucine from 2-oxobutanoate: step 2/4. It functions in the pathway amino-acid biosynthesis; L-valine biosynthesis; L-valine from pyruvate: step 2/4. Its function is as follows. Involved in the biosynthesis of branched-chain amino acids (BCAA). Catalyzes an alkyl-migration followed by a ketol-acid reduction of (S)-2-acetolactate (S2AL) to yield (R)-2,3-dihydroxy-isovalerate. In the isomerase reaction, S2AL is rearranged via a Mg-dependent methyl migration to produce 3-hydroxy-3-methyl-2-ketobutyrate (HMKB). In the reductase reaction, this 2-ketoacid undergoes a metal-dependent reduction by NADPH to yield (R)-2,3-dihydroxy-isovalerate. In Magnetococcus marinus (strain ATCC BAA-1437 / JCM 17883 / MC-1), this protein is Ketol-acid reductoisomerase (NADP(+)).